The primary structure comprises 245 residues: Large ribosomal subunit protein uL4 (245 aa).

A compositionally biased stretch (polar residues) spans 1–13 (MSRVATSDPSVTA). 3 disordered regions span residues 1–28 (MSRV…EGGS), 56–114 (ARQG…QRTP), and 224–245 (TSTA…EENK). Positions 59–71 (GTHDTKTRGEVRG) are enriched in basic and acidic residues. Residues 72–83 (GGRKPYRQKGTG) show a composition bias toward basic residues.

The protein belongs to the universal ribosomal protein uL4 family. Part of the 50S ribosomal subunit.

One of the primary rRNA binding proteins, this protein initially binds near the 5'-end of the 23S rRNA. It is important during the early stages of 50S assembly. It makes multiple contacts with different domains of the 23S rRNA in the assembled 50S subunit and ribosome. Its function is as follows. Forms part of the polypeptide exit tunnel. The chain is Large ribosomal subunit protein uL4 from Frankia casuarinae (strain DSM 45818 / CECT 9043 / HFP020203 / CcI3).